A 143-amino-acid polypeptide reads, in one-letter code: Spliceosomal protein DIB1 (143 aa).

A2 is modified (N-acetylalanine).

It belongs to the DIM1 family. Component of the U4/U6-U5 tri-snRNP complex composed of the U4, U6 and U5 snRNAs and at least PRP3, PRP4, PRP6, PRP8, PRP18, PRP31, PRP38, SNU13, SNU23, SNU66, SNU114, SPP381, SMB1, SMD1, SMD2, SMD3, SMX2, SMX3, LSM2, LSM3, LSM4, LSM5, LSM6, LSM7, LSM8, BRR2 and DIB1.

It localises to the nucleus. Essential role in pre-mRNA splicing. Also essential for entry into mitosis (G2/M progression) as well as for chromosome segregation during mitosis. This is Spliceosomal protein DIB1 (DIB1) from Saccharomyces cerevisiae (strain ATCC 204508 / S288c) (Baker's yeast).